Consider the following 34-residue polypeptide: MATVLSQSEIYIALVVAAHAAILALRLSVSLYRS.

A helical membrane pass occupies residues Ile10–Tyr32.

It belongs to the PsaM family.

It localises to the cellular thylakoid membrane. This Synechococcus sp. (strain RCC307) protein is Photosystem I reaction center subunit XII.